The following is a 249-amino-acid chain: AA9 family lytic polysaccharide monooxygenase cel61B (249 aa).

The signal sequence occupies residues 1-19 (MKSCAILAALGCLAGSVLG). A Cu(2+)-binding site is contributed by His-20. Residue Asn-25 is glycosylated (N-linked (GlcNAc...) asparagine). 2 cysteine pairs are disulfide-bonded: Cys-78–Cys-198 and Cys-120–Cys-124. His-108 is a Cu(2+) binding site. O2-binding residues include His-184 and Gln-193. Tyr-195 is a Cu(2+) binding site.

The protein belongs to the polysaccharide monooxygenase AA9 family. Monomer. Cu(2+) serves as cofactor.

It localises to the secreted. The enzyme catalyses [(1-&gt;4)-beta-D-glucosyl]n+m + reduced acceptor + O2 = 4-dehydro-beta-D-glucosyl-[(1-&gt;4)-beta-D-glucosyl]n-1 + [(1-&gt;4)-beta-D-glucosyl]m + acceptor + H2O.. Its function is as follows. Lytic polysaccharide monooxygenase (LPMO) that depolymerizes crystalline and amorphous polysaccharides via the oxidation of scissile alpha- or beta-(1-4)-glycosidic bonds, yielding C1 or C4 oxidation products. Catalysis by LPMOs requires the reduction of the active-site copper from Cu(II) to Cu(I) by a reducing agent and H(2)O(2) or O(2) as a cosubstrate. The polypeptide is AA9 family lytic polysaccharide monooxygenase cel61B (Hypocrea jecorina (strain QM6a) (Trichoderma reesei)).